The primary structure comprises 921 residues: Isoleucine--tRNA ligase (921 aa).

The short motif at 57–67 (PYANGELHMGH) is the 'HIGH' region element. L-isoleucyl-5'-AMP is bound at residue E552. The short motif at 593-597 (KMSKS) is the 'KMSKS' region element. K596 lines the ATP pocket. The Zn(2+) site is built by C888, C891, C908, and C911.

The protein belongs to the class-I aminoacyl-tRNA synthetase family. IleS type 1 subfamily. In terms of assembly, monomer. Zn(2+) is required as a cofactor.

The protein resides in the cytoplasm. The enzyme catalyses tRNA(Ile) + L-isoleucine + ATP = L-isoleucyl-tRNA(Ile) + AMP + diphosphate. Catalyzes the attachment of isoleucine to tRNA(Ile). As IleRS can inadvertently accommodate and process structurally similar amino acids such as valine, to avoid such errors it has two additional distinct tRNA(Ile)-dependent editing activities. One activity is designated as 'pretransfer' editing and involves the hydrolysis of activated Val-AMP. The other activity is designated 'posttransfer' editing and involves deacylation of mischarged Val-tRNA(Ile). In Listeria welshimeri serovar 6b (strain ATCC 35897 / DSM 20650 / CCUG 15529 / CIP 8149 / NCTC 11857 / SLCC 5334 / V8), this protein is Isoleucine--tRNA ligase.